The primary structure comprises 506 residues: Ecdysteroid UDP-glucosyltransferase (506 aa).

A signal peptide spans 1–18 (MTAYLIVFCLCCWSAARS).

It belongs to the UDP-glycosyltransferase family.

Catalyzes the transfer of glucose from UDP-glucose to ecdysteroids which are insect molting hormones. Expression of egt interferes with normal insect development and block molting. The polypeptide is Ecdysteroid UDP-glucosyltransferase (EGT) (Lymantria dispar multicapsid nuclear polyhedrosis virus (LdMNPV)).